The chain runs to 386 residues: Acyl-[acyl-carrier-protein] dehydrogenase MbtN (386 aa).

It belongs to the acyl-CoA dehydrogenase family. The cofactor is FAD.

The protein operates within siderophore biosynthesis; mycobactin biosynthesis. Functionally, catalyzes the dehydrogenation at the alpha-beta position of ACP-bound acyl chains. This results in the introduction of a double bond in the lipidic chain, which is further transferred to the epsilon-amino group of lysine residue in the mycobactin core by MbtK. The polypeptide is Acyl-[acyl-carrier-protein] dehydrogenase MbtN (mbtN) (Mycobacterium bovis (strain ATCC BAA-935 / AF2122/97)).